The primary structure comprises 764 residues: Complement factor B (764 aa).

Residues 1–25 (MGSNLSPQLCLMPFILGLLSGGVTT) form the signal peptide. 3 consecutive Sushi domains span residues 35-100 (GSCS…ECRA), 101-160 (IHCP…ICDN), and 163-220 (GYCS…SCQD). 6 cysteine pairs are disulfide-bonded: Cys-37-Cys-76, Cys-62-Cys-98, Cys-103-Cys-145, Cys-131-Cys-158, Cys-165-Cys-205, and Cys-191-Cys-218. Residues Asn-122 and Asn-142 are each glycosylated (N-linked (GlcNAc...) asparagine). The VWFA domain maps to 270–469 (NIYLVLDGSD…NLEDVFYQMI (200 aa)). The Mg(2+) site is built by Ser-278 and Ser-280. Residues Ser-278 and Ser-280 each coordinate Mn(2+). N-linked (GlcNAc...) asparagine glycosylation is present at Asn-285. Lys-291 is a glycosylation site (N-linked (Glc) (glycation) lysine). Mg(2+) is bound at residue Thr-353. Thr-353 contributes to the Mn(2+) binding site. N-linked (GlcNAc...) asparagine glycosylation is present at Asn-378. The 281-residue stretch at 477-757 (LCGMVWEHRK…VLPWLKEKLQ (281 aa)) folds into the Peptidase S1 domain. Disulfide bonds link Cys-478–Cys-596, Cys-511–Cys-527, Cys-599–Cys-615, Cys-656–Cys-682, and Cys-695–Cys-725. Catalysis depends on charge relay system residues His-526 and Asp-576. Catalysis depends on Ser-699, which acts as the Charge relay system.

The protein belongs to the peptidase S1 family. Monomer. Interacts with complement C3b; this interaction is dependent on the presence of Mg(2+). As to quaternary structure, catalytic component of the C3 convertase of the alternative complement pathway, also named C3bBb, composed of complement factor B Bb and complement C3b. Catalytic component of the C5 convertase of the alternative complement pathway, also named C3bBb3b, composed of complement factor B Bb and additional molecules of complement C3b. Interacts to CFP; this interaction contributes to the stabilization of the active C3-convertase enzyme complex. Mg(2+) is required as a cofactor. It depends on Mn(2+) as a cofactor. Post-translationally, cleaved by CFD following activation of the alternative complement system, generating Ba and Bb chains. Cleavage and activation takes place when CFB is already associated with complement C3b.

It localises to the secreted. The protein resides in the cell surface. The enzyme catalyses Cleavage of Arg-|-Ser bond in complement component C3 alpha-chain to yield C3a and C3b, and Arg-|-Xaa bond in complement component C5 alpha-chain to yield C5a and C5b.. In terms of biological role, precursor of the catalytic component of the C3 and C5 convertase complexes of the alternative pathway of the complement system, a cascade of proteins that leads to phagocytosis and breakdown of pathogens and signaling that strengthens the adaptive immune system. The alternative complement pathway acts as an amplification loop that enhances other complement pathways (classical, lectin and GZMK) by promoting formation of additional C3 and C5 convertases. CFB is cleaved and activated by CFD to generate Ba and Bb chains; Bb chain constituting the catalytic component of the C3 and C5 convertases. Serine protease component of the complement C3 and C5 convertase complexes of the alternative complement pathway. Following cleavage and activation by factor D (CFD), forms the C3 convertase together with complement C3b. As part of the C3 convertase, cleaves and activates C3 into C3a anaphylatoxin and C3b opsonin, the next components of the complement pathways. When an additional complement C3b molecule binds to the C3 convertase, forms the C5 convertase, which cleaves and activates C5 into C5a anaphylatoxin and C5b component of the membrane attack complex. Functionally, involved in proliferation and differentiation of preactivated B-lymphocytes, rapid spreading of peripheral blood monocytes, stimulation of lymphocyte blastogenesis and lysis of erythrocytes. This chain is Complement factor B, found in Homo sapiens (Human).